Consider the following 359-residue polypeptide: Isopentenyl-diphosphate delta-isomerase (359 aa).

11–12 is a binding site for substrate; that stretch reads RK. FMN-binding positions include Ser-68, 69–71, Ser-99, and Asn-127; that span reads GMT. Substrate is bound at residue 99 to 101; it reads SQR. Residue Gln-163 participates in substrate binding. Glu-164 provides a ligand contact to Mg(2+). Residues Lys-199, Thr-229, 278-280, and 299-300 each bind FMN; these read GIR and AL.

Belongs to the IPP isomerase type 2 family. Homooctamer. Dimer of tetramers. Requires FMN as cofactor. NADPH serves as cofactor. The cofactor is Mg(2+).

It localises to the cytoplasm. It carries out the reaction isopentenyl diphosphate = dimethylallyl diphosphate. Inhibited by 3,4-epoxy-3-methylbutyl diphosphate (EIPP). Functionally, involved in the biosynthesis of isoprenoids. Catalyzes the 1,3-allylic rearrangement of the homoallylic substrate isopentenyl (IPP) to its allylic isomer, dimethylallyl diphosphate (DMAPP). In Methanocaldococcus jannaschii (strain ATCC 43067 / DSM 2661 / JAL-1 / JCM 10045 / NBRC 100440) (Methanococcus jannaschii), this protein is Isopentenyl-diphosphate delta-isomerase.